The primary structure comprises 182 residues: ADP-ribosylation factor 1 (182 aa).

Gly-2 is lipidated: N-myristoyl glycine. Residues 3–16 form an important for the stable binding to the membranes region; it reads NVFANLFKGLFGKK. GTP is bound by residues 24–32, 126–129, and Ala-160; these read GLDAAGKTT and NKQD.

The protein belongs to the small GTPase superfamily. Arf family.

It localises to the golgi apparatus membrane. Its subcellular location is the cytoplasm. It is found in the cytosol. It catalyses the reaction GTP + H2O = GDP + phosphate + H(+). Its activity is regulated as follows. Alternates between an inactive GDP-bound form and an active GTP-bound form. Activated by a guanine nucleotide-exchange factor (GEF) and inactivated by GTPase-activating protein (GAP). Its function is as follows. Small GTPase involved in protein trafficking between different compartments. Modulates vesicle budding and uncoating within the Golgi complex. In its GTP-bound form, triggers the recruitment of coatomer proteins to the Golgi membrane. The hydrolysis of ARF1-bound GTP, which is mediated by ARFGAPs proteins, is required for dissociation of coat proteins from Golgi membranes and vesicles. Has a role in eye development. Required for cleavage furrow ingression in embryonic cells. The protein is ADP-ribosylation factor 1 of Drosophila melanogaster (Fruit fly).